The chain runs to 438 residues: GTPase Obg (438 aa).

The 159-residue stretch at 2 to 160 folds into the Obg domain; that stretch reads SMFLDTAKIS…RELELELKIL (159 aa). The tract at residues 128–147 is disordered; the sequence is NIRFATPRNPAPEIAENGEP. The 178-residue stretch at 161–338 folds into the OBG-type G domain; that stretch reads ADVGLVGFPS…LLDATANLLA (178 aa). GTP-binding positions include 167–174, 192–196, 214–217, 284–287, and 319–321; these read GFPSVGKS, FTTIV, DLPG, NKMD, and STL. Mg(2+)-binding residues include Ser174 and Thr194. The 79-residue stretch at 360 to 438 folds into the OCT domain; the sequence is GFSEEEKAFE…IGNFEFEFVD (79 aa).

This sequence belongs to the TRAFAC class OBG-HflX-like GTPase superfamily. OBG GTPase family. Monomer. Mg(2+) serves as cofactor.

The protein localises to the cytoplasm. Functionally, an essential GTPase which binds GTP, GDP and possibly (p)ppGpp with moderate affinity, with high nucleotide exchange rates and a fairly low GTP hydrolysis rate. Plays a role in control of the cell cycle, stress response, ribosome biogenesis and in those bacteria that undergo differentiation, in morphogenesis control. In Streptococcus uberis (strain ATCC BAA-854 / 0140J), this protein is GTPase Obg.